The sequence spans 1753 residues: Negative regulator of sporulation PMD1 (1753 aa).

2 Kelch repeats span residues 143–198 and 206–253; these read NIYI…VLNE and KLII…KILV. Thr298 carries the post-translational modification Phosphothreonine. A compositionally biased stretch (polar residues) spans 651-664; it reads TTKFGNSSQSSNGS. 2 disordered regions span residues 651–753 and 771–807; these read TTKF…TTCS and LGLS…CTLS. Low complexity predominate over residues 670-683; that stretch reads SKNGNSKSNSNTSL. Polar residues-rich tracts occupy residues 690–699, 740–753, 774–783, and 797–807; these read DFTSSTSSPK, TGTS…TTCS, SEQSGRSTRA, and NDGNDSNCTLS. Position 838 is a phosphoserine (Ser838). Disordered regions lie at residues 875-915, 938-957, and 962-988; these read IASP…LGSS, PLEP…SSLA, and FGRD…ARRI. Positions 880–900 are enriched in low complexity; it reads QSRQTSFASTASTASVVSSTS. Positions 938 to 947 are enriched in pro residues; it reads PLEPLPPVPK. Positions 979–988 are enriched in low complexity; sequence KSSSSDARRI. Residues Ser1289, Ser1307, and Ser1356 each carry the phosphoserine modification. 3 disordered regions span residues 1312-1467, 1604-1686, and 1706-1753; these read SPAT…DLDS, PIFA…NKRF, and SAVN…GKRR. The span at 1344–1379 shows a compositional bias: polar residues; it reads VSRQQNFPRRSSSFTETVPTEPTRYNYQNLDSSKSN. Residues 1399–1430 are compositionally biased toward basic and acidic residues; sequence NFDKYKVETLQKRNSNDGKDLDRTNDPLKNRG. Over residues 1653-1677 the composition is skewed to polar residues; that stretch reads IKFSQAPSTQISPRTSVTDFTASQQ. The residue at position 1664 (Ser1664) is a Phosphoserine. Residues 1711–1723 show a composition bias toward basic and acidic residues; sequence GRKESEGHCEDRS.

It is found in the cytoplasm. Negatively regulates early sporulation-specific genes. Seems to exert its function by positively regulating the Ras/cAMP pathway. Required for growth under alkaline conditions. Acts synergetically with MDS3. The sequence is that of Negative regulator of sporulation PMD1 (PMD1) from Saccharomyces cerevisiae (strain ATCC 204508 / S288c) (Baker's yeast).